The following is a 396-amino-acid chain: Vitamin K-dependent protein Z (396 aa).

Residues 1 to 46 (AGSYLLEELFEGHLEKECWEEICVYEEAREVFEDDETTDEFWRTYM) enclose the Gla domain. 4-carboxyglutamate is present on residues Glu-7, Glu-8, Glu-11, Glu-15, Glu-17, Glu-20, Glu-21, Glu-26, Glu-27, Glu-30, Glu-33, Glu-36, and Glu-40. A disulfide bond links Cys-18 and Cys-23. 2 EGF-like domains span residues 47-83 (GGSP…PNCA) and 85-126 (AESE…RSCL). 7 disulfides stabilise this stretch: Cys-51–Cys-62, Cys-56–Cys-71, Cys-73–Cys-82, Cys-89–Cys-101, Cys-97–Cys-110, Cys-112–Cys-125, and Cys-169–Cys-185. Ser-53 is a glycosylation site (O-linked (Glc...) serine). An N-linked (GlcNAc...) asparagine glycan is attached at Asn-59. Residue Asp-64 is modified to (3R)-3-hydroxyaspartate. Residues 135-357 (TLGPECCQRP…YALWLRQVTQ (223 aa)) enclose the Peptidase S1 domain. 2 N-linked (GlcNAc...) asparagine glycosylation sites follow: Asn-191 and Asn-289. Cys-284 and Cys-298 are oxidised to a cystine. Residues 356–396 (TQQPSRASPRGDRGQGRDGEPVPGDRGGRWAPTALPPGPLV) are disordered. Positions 364 to 375 (PRGDRGQGRDGE) are enriched in basic and acidic residues. Thr-388 carries an O-linked (GalNAc...) threonine glycan.

This sequence belongs to the peptidase S1 family. The iron and 2-oxoglutarate dependent 3-hydroxylation of aspartate and asparagine is (R) stereospecific within EGF domains. As to expression, plasma.

The protein resides in the secreted. Functionally, inhibits activity of the coagulation protease factor Xa in the presence of SERPINA10, calcium and phospholipids. Appears to assist hemostasis by binding thrombin and promoting its association with phospholipid vesicles. In Bos taurus (Bovine), this protein is Vitamin K-dependent protein Z (PROZ).